The following is a 183-amino-acid chain: Globin-like protein 26 (183 aa).

Residues 1 to 25 (MGSSTSTPAPPPKKNKPEGRKADNQ) form a disordered region. Glycine 2 carries N-myristoyl glycine lipidation. Positions 12–18 (PKKNKPE) match the Nuclear localization signal motif. The Globin domain maps to 26–166 (ILNSYQKSIV…VVDQLRFGYS (141 aa)). Heme-binding residues include histidine 77 and histidine 109.

The protein belongs to the globin family. In terms of assembly, homodimer. Occurs in an equilibrium of monomeric and dimeric forms in solution. Detected in the head mesodermal cell. In the tail region, detected in the stomatointestinal and anal depressor muscle cells.

It is found in the cytoplasm. It localises to the nucleus lamina. The protein resides in the cell membrane. In terms of biological role, plays a role in electron transport. Utilizes the bis-histidyl hexacoordinated complex with iron to transfer electrons to cytochrome c and molecular oxygen. Plays a regulatory role in the periodicity of the defecation cycle under oxidative stress conditions. Not involved in imparting protection against general conditions of oxidative stress. May participate in redox reactions under anaerobic conditions. The chain is Globin-like protein 26 from Caenorhabditis elegans.